We begin with the raw amino-acid sequence, 621 residues long: Kininogen-1 (621 aa).

Positions 1-18 (MKLITILFLCSRLLPSLT) are cleaved as a signal peptide. The 105-residue stretch at 27–131 (CNDQDVFKAV…IQTCLITPAE (105 aa)) folds into the Cystatin kininogen-type 1 domain. Cystine bridges form between Cys27/Cys591, Cys82/Cys93, Cys106/Cys125, Cys141/Cys144, Cys205/Cys217, Cys228/Cys247, Cys263/Cys266, Cys327/Cys339, and Cys350/Cys369. Asn47 and Asn87 each carry an N-linked (GlcNAc...) asparagine glycan. O-linked (GalNAc...) threonine; partial glycosylation occurs at Thr136. Positions 150–253 (TKSPDLEPVL…SQKCDLYPVK (104 aa)) constitute a Cystatin kininogen-type 2 domain. Residues Asn168 and Asn169 are each glycosylated (N-linked (GlcNAc...) asparagine). The N-linked (GlcNAc...) asparagine; partial glycan is linked to Asn197. Asn204 carries N-linked (GlcNAc...) asparagine glycosylation. The Cystatin kininogen-type 3 domain maps to 272 to 375 (VDSPDLEEPL…TVNCQPLGQT (104 aa)). Ser331 carries the phosphoserine modification. Positions 396-497 (EGSTTVSLPH…GKNNGKHYDW (102 aa)) are disordered. Ser398 carries O-linked (GalNAc...) serine glycosylation. 2 O-linked (GalNAc...) threonine glycosylation sites follow: Thr399 and Thr400. The O-linked (GalNAc...) serine glycan is linked to Ser406. The span at 444 to 492 (GHKHKHDQGHGHHGSHGLGHGHQKQHGLGHGHKHGHGHGKHKNKGKNNG) shows a compositional bias: basic residues. The O-linked (GalNAc...) serine glycan is linked to Ser512. Residues Thr520, Thr524, Thr536, Thr548, Thr553, and Thr570 are each glycosylated (O-linked (GalNAc...) threonine). Ser581 carries O-linked (GalNAc...) serine glycosylation.

Post-translationally, bradykinin is released from kininogen by plasma kallikrein. In terms of processing, phosphorylated by FAM20C in the extracellular medium. Bradykinin is inactivated by ACE, which removes the dipeptide Arg-Phe from its C-terminus. Plasma.

It localises to the secreted. Its subcellular location is the extracellular space. Functionally, kininogens are inhibitors of thiol proteases. HMW-kininogen plays an important role in blood coagulation by helping to position optimally prekallikrein and factor XI next to factor XII; HMW-kininogen inhibits the thrombin- and plasmin-induced aggregation of thrombocytes. LMW-kininogen inhibits the aggregation of thrombocytes. LMW-kininogen is in contrast to HMW-kininogen not involved in blood clotting. The active peptide bradykinin is a potent vasodilatator that is released from HMW-kininogen shows a variety of physiological effects: (A) influence in smooth muscle contraction, (B) induction of hypotension, (C) natriuresis and diuresis, (D) decrease in blood glucose level, (E) it is a mediator of inflammation and causes (E1) increase in vascular permeability, (E2) stimulation of nociceptors (4E3) release of other mediators of inflammation (e.g. prostaglandins), (F) it has a cardioprotective effect (directly via bradykinin action, indirectly via endothelium-derived relaxing factor action). In Bos taurus (Bovine), this protein is Kininogen-1 (KNG1).